The chain runs to 67 residues: Small ribosomal subunit protein eS27 (67 aa).

Zn(2+) is bound by residues cysteine 22, cysteine 25, cysteine 41, and cysteine 44. The C4-type zinc finger occupies 22–44 (CPDCGNEQVTFSHAAMVVRCLVC).

Belongs to the eukaryotic ribosomal protein eS27 family. As to quaternary structure, part of the 30S ribosomal subunit. It depends on Zn(2+) as a cofactor.

This is Small ribosomal subunit protein eS27 from Pyrobaculum neutrophilum (strain DSM 2338 / JCM 9278 / NBRC 100436 / V24Sta) (Thermoproteus neutrophilus).